The chain runs to 32 residues: Defensin-3 (32 aa).

3 disulfide bridges follow: C3-C31, C5-C20, and C10-C30.

The protein resides in the secreted. Functionally, has antibacterial activity against the Gram-negative bacterium E.coli and the Gram-positive bacteria L.monocytogenes and S.aureus. Has antifungal activity against C.albicans. The sequence is that of Defensin-3 from Papio hamadryas (Hamadryas baboon).